A 229-amino-acid chain; its full sequence is Large ribosomal subunit protein uL1 (229 aa).

This sequence belongs to the universal ribosomal protein uL1 family. In terms of assembly, part of the 50S ribosomal subunit.

In terms of biological role, binds directly to 23S rRNA. The L1 stalk is quite mobile in the ribosome, and is involved in E site tRNA release. Its function is as follows. Protein L1 is also a translational repressor protein, it controls the translation of the L11 operon by binding to its mRNA. The polypeptide is Large ribosomal subunit protein uL1 (Caulobacter sp. (strain K31)).